We begin with the raw amino-acid sequence, 720 residues long: Calcium/calmodulin-dependent protein kinase type II (720 aa).

Residues 12–269 (YDVKEELGKG…ADQALKVPWI (258 aa)) enclose the Protein kinase domain. Residues 18 to 26 (LGKGAFSVV) and Lys-41 contribute to the ATP site. Residue Asp-134 is the Proton acceptor of the active site. The residue at position 284 (Thr-284) is a Phosphothreonine; by autocatalysis. Disordered stretches follow at residues 317-345 (SDST…QPTS) and 504-586 (DNLS…NLSA). Composition is skewed to polar residues over residues 504 to 514 (DNLSASTSSDL) and 526 to 540 (PPST…SQTI). The span at 569-586 (SSSNSSTASKSSSTNLSA) shows a compositional bias: low complexity.

Belongs to the protein kinase superfamily. CAMK Ser/Thr protein kinase family. CaMK subfamily. In terms of assembly, dodecamer. Subunits are tightly packed around a central ring-shaped scaffold with extensive contacts between the regulatory segment of one kinase and the catalytic domain of another enabling cooperative activation of a subunit by the adjacent molecule. Interacts with and phosphorylates daf-16; the interaction promotes daf-16 nuclear localization. Interacts with egl-2 and tir-1. Interacts with nsy-1. The cofactor is Mg(2+). Expressed in the nervous system. Observed in the ADF and AWC neurons. Position in AWC neurons is regulated by microtubules. Localized to clusters in ventral cord neurites which appear to be required for glr-1 trafficking. Also present in oocytes.

Its subcellular location is the cytoplasm. The protein resides in the cell projection. It localises to the axon. The protein localises to the perikaryon. The catalysed reaction is L-seryl-[protein] + ATP = O-phospho-L-seryl-[protein] + ADP + H(+). It catalyses the reaction L-threonyl-[protein] + ATP = O-phospho-L-threonyl-[protein] + ADP + H(+). Ca2(+)/calmodulin binding removes an autoinhibitory regulatory segment located C-terminal to the kinase domain. This releases the catalytic activity of the enzyme and makes accessible a regulatory residue Thr-284. Phosphorylation of Thr-284 by another kinase domain within the oligomeric holoenzyme keeps CaMKII active in the absence of Ca(2+)/calmodulin by preventing the rebinding of the regulatory segment to the kinase domain and by increasing the affinity of calmodulin for the enzyme. Can respond to high-frequency Ca(2+) pulses to become Ca(2+) independent. Acts in the signaling of a variety of pathways and processes. Phosphorylates 'Ser-319' of daf-16 in response to stress signals, such as heat, starvation and oxidation, which plays a role in prolonging lifespan. Required for viability under chronic osmotic stress in which it acts downstream of osr-1. Has roles in locomotion, oocyte maturation, brood size, egg laying, defecation, meiotic maturation and neuronal cell fate specification. Required for the regulation of synaptic density and neuromuscular junction morphology. Regulates the synaptic trafficking of glr-1. Bidirectional modulator of neurotransmitter release with negative modulatory effects mainly mediated via slo-1 activation. Involved in activation of ADF neurons and increased tph-1 transcription following exposure to pathogenic bacteria which leads to learned olfactory aversion to the bacteria. Implicated in the muscle regulation of spicule protraction. In conjunction with egl-2 has a role in the suppression of mating behavior under food deprivation to encourage foraging. Involved in restricting str-2 expression to only one of the two AWC neurons. May suppress the functional response to an internal pacemaker, perhaps by modulating the activity of the IP3 receptor. In Caenorhabditis elegans, this protein is Calcium/calmodulin-dependent protein kinase type II (unc-43).